Consider the following 430-residue polypeptide: Asparagine--tRNA ligase (430 aa).

This sequence belongs to the class-II aminoacyl-tRNA synthetase family. Homodimer.

It is found in the cytoplasm. The enzyme catalyses tRNA(Asn) + L-asparagine + ATP = L-asparaginyl-tRNA(Asn) + AMP + diphosphate + H(+). This is Asparagine--tRNA ligase from Bacillus licheniformis (strain ATCC 14580 / DSM 13 / JCM 2505 / CCUG 7422 / NBRC 12200 / NCIMB 9375 / NCTC 10341 / NRRL NRS-1264 / Gibson 46).